Here is an 88-residue protein sequence, read N- to C-terminus: uncharacterized protein (88 aa).

This is an uncharacterized protein from Escherichia coli O157:H7.